The sequence spans 71 residues: uncharacterized protein (71 aa).

Positions 1–20 (MQKLNKHLKKKKQKRKKMKK) are disordered.

This is an uncharacterized protein from Methanocaldococcus jannaschii (strain ATCC 43067 / DSM 2661 / JAL-1 / JCM 10045 / NBRC 100440) (Methanococcus jannaschii).